Reading from the N-terminus, the 1232-residue chain is Pyruvate:ferredoxin oxidoreductase (1232 aa).

Thr31 lines the pyruvate pocket. Glu64 contributes to the thiamine diphosphate binding site. Residue Arg114 participates in pyruvate binding. Residues 427–431 (ADGTV), Lys459, Asn560, and Asn602 contribute to the CoA site. 2 4Fe-4S ferredoxin-type domains span residues 680 to 709 (NVPQ…PVLA) and 736 to 767 (FRIQ…MQPL). Residues Cys689, Cys692, Cys695, Cys699, Cys745, Cys748, Cys751, Cys755, Cys812, and Cys815 each contribute to the [4Fe-4S] cluster site. Thiamine diphosphate is bound by residues Glu817, Cys840, and 962–965 (GDGW). Cys840 is a binding site for [4Fe-4S] cluster. Asp963 is a binding site for Mg(2+). Ca(2+) is bound by residues Asp983 and Asn985. Positions 991 and 993 each coordinate Mg(2+). Residue 991-996 (TEVYSN) coordinates thiamine diphosphate. Ca(2+) is bound by residues Ala1056, Phe1059, Gly1061, and Ser1063. Cys1071 serves as a coordination point for [4Fe-4S] cluster. Cys1195 and Cys1212 are joined by a disulfide. The segment at 1197–1232 (RDDTPMMARPDSGEACDQNRAGTSEQQGDLSKRTKK) is disordered. Positions 1216–1225 (RAGTSEQQGD) are enriched in polar residues.

The protein belongs to the pyruvate:ferredoxin/flavodoxin oxidoreductase family. As to quaternary structure, homodimer. [4Fe-4S] cluster serves as cofactor. Thiamine diphosphate is required as a cofactor. Requires Mg(2+) as cofactor.

The protein localises to the cytoplasm. The enzyme catalyses 2 oxidized [2Fe-2S]-[ferredoxin] + pyruvate + CoA = 2 reduced [2Fe-2S]-[ferredoxin] + acetyl-CoA + CO2 + H(+). Its function is as follows. Catalyzes the ferredoxin-dependent oxidative decarboxylation of pyruvate. Required for the transfer of electrons from pyruvate to ferredoxin. Ferredoxin I and ferredoxin II, which are single 4Fe-4S cluster ferredoxins are the most effective electron carriers of POR. This Desulfocurvibacter africanus (Desulfovibrio africanus) protein is Pyruvate:ferredoxin oxidoreductase.